The following is a 261-amino-acid chain: Endonuclease NucS (261 aa).

The protein belongs to the NucS endonuclease family.

It is found in the cytoplasm. Cleaves both 3' and 5' ssDNA extremities of branched DNA structures. This chain is Endonuclease NucS, found in Aeropyrum pernix (strain ATCC 700893 / DSM 11879 / JCM 9820 / NBRC 100138 / K1).